We begin with the raw amino-acid sequence, 132 residues long: Aspartate 1-decarboxylase (132 aa).

The Schiff-base intermediate with substrate; via pyruvic acid role is filled by serine 25. Residue serine 25 is modified to Pyruvic acid (Ser). Threonine 57 provides a ligand contact to substrate. The active-site Proton donor is tyrosine 58. Residue 73–75 (GAA) coordinates substrate.

The protein belongs to the PanD family. Heterooctamer of four alpha and four beta subunits. Pyruvate is required as a cofactor. Is synthesized initially as an inactive proenzyme, which is activated by self-cleavage at a specific serine bond to produce a beta-subunit with a hydroxyl group at its C-terminus and an alpha-subunit with a pyruvoyl group at its N-terminus.

It localises to the cytoplasm. It carries out the reaction L-aspartate + H(+) = beta-alanine + CO2. The protein operates within cofactor biosynthesis; (R)-pantothenate biosynthesis; beta-alanine from L-aspartate: step 1/1. Catalyzes the pyruvoyl-dependent decarboxylation of aspartate to produce beta-alanine. The polypeptide is Aspartate 1-decarboxylase (Pelotomaculum thermopropionicum (strain DSM 13744 / JCM 10971 / SI)).